Consider the following 527-residue polypeptide: Zinc finger protein 35 (527 aa).

Residues 9–221 (MALAPWGPVK…NPKTQLGQKP (213 aa)) form a globular domain region. The tract at residues 16–38 (PVKVKKEEEEEENFPGQASSQQV) is disordered. Glycyl lysine isopeptide (Lys-Gly) (interchain with G-Cter in SUMO2) cross-links involve residues Lys-20, Lys-21, Lys-99, Lys-117, Lys-125, Lys-144, Lys-158, Lys-189, and Lys-214. 2 consecutive C2H2-type zinc fingers follow at residues 222 to 244 (FTCSVCGKGFSQSANLVVHQRIH) and 250 to 272 (FECHECGKAFIQSANLVVHQRIH). Residue Lys-276 forms a Glycyl lysine isopeptide (Lys-Gly) (interchain with G-Cter in SUMO2) linkage. C2H2-type zinc fingers lie at residues 278–300 (YVCSKCGKAFTQSSNLTVHQKIH), 306–328 (FKCNECEKAFSYSSQLARHQKVH), 334–356 (YECNECGKTFTRSSNLIVHQRIH), 362–384 (FACNDCGKAFTQSANLIVHQRSH), 390–412 (YECKECGKAFSCFSHLIVHQRIH), 418–440 (YDCSECGKAFSQLSCLIVHQRIH), 446–468 (YVCNECGKAFTCSSYLLIHQRIH), 474–496 (YTCNECGKAFRQRSSLTVHQRTH), and 502–524 (YECEKCGAAFISNSHLMRHHRTH).

The protein belongs to the krueppel C2H2-type zinc-finger protein family.

It localises to the nucleus. In terms of biological role, may be involved in transcriptional regulation. Involved in cell differentiation and/or proliferation. This is Zinc finger protein 35 (ZNF35) from Homo sapiens (Human).